A 227-amino-acid chain; its full sequence is MNIKGSPWKGSLLLLLVSNLLLCQSVAPLPICPGGAARCQVTLRDLFDRAVVLSHYIHNLSSEMFSEFDKRYTHGRGFITKAINSCHTSSLATPEDKEQAQQMNQKDFLSLIVSILRSWNEPLYHLVTEVRGMQEAPEAILSKAVEIEEQTKRLLEGMELIVSQVHPETKENEIYPVWSGLPSLQMADEESRLSAYYNLLHCLRRDSHKIDNYLKLLKCRIIHNNNC.

The N-terminal stretch at 1 to 28 is a signal peptide; it reads MNIKGSPWKGSLLLLLVSNLLLCQSVAP. An intrachain disulfide couples C32 to C39. S54 carries the post-translational modification Phosphoserine. N59 carries N-linked (GlcNAc...) asparagine; partial glycosylation. S62, S118, S163, and S194 each carry phosphoserine. 2 cysteine pairs are disulfide-bonded: C86–C202 and C219–C227.

Belongs to the somatotropin/prolactin family. Interacts with PRLR.

It localises to the secreted. Its function is as follows. Prolactin acts primarily on the mammary gland by promoting lactation. The polypeptide is Prolactin (PRL) (Homo sapiens (Human)).